The chain runs to 333 residues: Phosphate acyltransferase (333 aa).

The protein belongs to the PlsX family. Homodimer. Probably interacts with PlsY.

It is found in the cytoplasm. It carries out the reaction a fatty acyl-[ACP] + phosphate = an acyl phosphate + holo-[ACP]. It participates in lipid metabolism; phospholipid metabolism. Functionally, catalyzes the reversible formation of acyl-phosphate (acyl-PO(4)) from acyl-[acyl-carrier-protein] (acyl-ACP). This enzyme utilizes acyl-ACP as fatty acyl donor, but not acyl-CoA. This is Phosphate acyltransferase from Lactobacillus helveticus (strain DPC 4571).